A 750-amino-acid polypeptide reads, in one-letter code: Neprilysin (750 aa).

The span at 1-14 shows a compositional bias: polar residues; that stretch reads MGRSESQMDITDIN. The disordered stretch occupies residues 1 to 20; sequence MGRSESQMDITDINTPKPKK. Gly2 carries N-myristoyl glycine lipidation. Over 2–28 the chain is Cytoplasmic; the sequence is GRSESQMDITDINTPKPKKKQRWTPLE. A phosphoserine mark is found at Ser4 and Ser6. Residues 16–23 carry the Stop-transfer sequence motif; the sequence is PKPKKKQR. The helical; Signal-anchor for type II membrane protein transmembrane segment at 29-51 threads the bilayer; that stretch reads ISLSVLVLLLTVIAVTMIALYAT. At 52–750 the chain is on the extracellular side; it reads YDDGICKSSD…MNPEKKCRVW (699 aa). In terms of domain architecture, Peptidase M13 spans 56–750; it reads ICKSSDCIKS…MNPEKKCRVW (695 aa). Cystine bridges form between Cys57–Cys62, Cys80–Cys735, Cys88–Cys695, Cys143–Cys411, Cys234–Cys242, and Cys621–Cys747. Arg103 lines the a peptide pocket. Asn145 carries N-linked (GlcNAc...) asparagine glycosylation. N-linked (GlcNAc...) asparagine glycans are attached at residues Asn285, Asn311, and Asn325. Zn(2+) is bound at residue His584. Glu585 is an active-site residue. Residue His588 coordinates Zn(2+). The N-linked (GlcNAc...) asparagine glycan is linked to Asn628. Zn(2+) is bound at residue Glu647. Asp651 acts as the Proton donor in catalysis.

It belongs to the peptidase M13 family. It depends on Zn(2+) as a cofactor. Post-translationally, myristoylation is a determinant of membrane targeting. Glycosylation at Asn-628 is necessary both for surface expression and neutral endopeptidase activity.

The protein resides in the cell membrane. The enzyme catalyses Preferential cleavage of polypeptides between hydrophobic residues, particularly with Phe or Tyr at P1'.. It catalyses the reaction substance P + H2O = substance P(1-9) + L-Leu-L-Met-NH2. It carries out the reaction substance P + H2O = substance P(1-7) + L-Phe-Gly-L-Leu-L-Met-NH2. The catalysed reaction is neurotensin + H2O = neurotensin(1-11) + L-isoleucyl-L-leucine. The enzyme catalyses neurotensin + H2O = neurotensin(1-10) + L-tyrosyl-L-isoleucyl-L-leucine. Its activity is regulated as follows. Inhibited by mixanpril, an orally-active drug used for the treatment of hypertension. Thermolysin-like specificity, but is almost confined on acting on polypeptides of up to 30 amino acids. Biologically important in the destruction of opioid peptides such as Met- and Leu-enkephalins by cleavage of a Gly-Phe bond. Catalyzes cleavage of bradykinin, substance P and neurotensin peptides. Able to cleave angiotensin-1, angiotensin-2 and angiotensin 1-9. Involved in the degradation of atrial natriuretic factor (ANF) and brain natriuretic factor (BNP(1-32)). Displays UV-inducible elastase activity toward skin preelastic and elastic fibers. This is Neprilysin (MME) from Oryctolagus cuniculus (Rabbit).